The following is a 610-amino-acid chain: UvrABC system protein C (610 aa).

In terms of domain architecture, GIY-YIG spans 13–92 (TLPGVYLMKN…IKQHKPRYNA (80 aa)). The UVR domain maps to 204–239 (KDVLKDLYEEMRLLSEQLEFEKANHLLRTIRYIEKT).

This sequence belongs to the UvrC family. In terms of assembly, interacts with UvrB in an incision complex.

It is found in the cytoplasm. The UvrABC repair system catalyzes the recognition and processing of DNA lesions. UvrC both incises the 5' and 3' sides of the lesion. The N-terminal half is responsible for the 3' incision and the C-terminal half is responsible for the 5' incision. The sequence is that of UvrABC system protein C from Protochlamydia amoebophila (strain UWE25).